Consider the following 692-residue polypeptide: ABC1 family protein C21C3.03, mitochondrial (692 aa).

The transit peptide at 1 to 91 directs the protein to the mitochondrion; sequence MISFSHWNSH…RKFTTRQKSE (91 aa). Helical transmembrane passes span 96-116 and 161-181; these read WRIL…LWIL and LFII…ISFL.

Belongs to the protein kinase superfamily. ADCK protein kinase family.

The protein localises to the mitochondrion membrane. This chain is ABC1 family protein C21C3.03, mitochondrial, found in Schizosaccharomyces pombe (strain 972 / ATCC 24843) (Fission yeast).